The following is a 320-amino-acid chain: ATP-dependent 6-phosphofructokinase (320 aa).

Glycine 12 is a binding site for ATP. 22–26 (RGVVR) contributes to the ADP binding site. Residues 73–74 (RF) and 103–106 (GDGS) contribute to the ATP site. Aspartate 104 contacts Mg(2+). 126–128 (TID) serves as a coordination point for substrate. Aspartate 128 acts as the Proton acceptor in catalysis. Arginine 155 serves as a coordination point for ADP. Substrate is bound by residues arginine 163 and 170-172 (MGR). ADP-binding positions include 186–188 (GCE), lysine 212, and 214–216 (KKH). Substrate-binding positions include glutamate 223, arginine 244, and 250–253 (HIQR).

It belongs to the phosphofructokinase type A (PFKA) family. ATP-dependent PFK group I subfamily. Prokaryotic clade 'B1' sub-subfamily. In terms of assembly, homotetramer. Mg(2+) is required as a cofactor.

The protein localises to the cytoplasm. It catalyses the reaction beta-D-fructose 6-phosphate + ATP = beta-D-fructose 1,6-bisphosphate + ADP + H(+). It participates in carbohydrate degradation; glycolysis; D-glyceraldehyde 3-phosphate and glycerone phosphate from D-glucose: step 3/4. With respect to regulation, allosterically activated by ADP and other diphosphonucleosides, and allosterically inhibited by phosphoenolpyruvate. Its function is as follows. Catalyzes the phosphorylation of D-fructose 6-phosphate to fructose 1,6-bisphosphate by ATP, the first committing step of glycolysis. This chain is ATP-dependent 6-phosphofructokinase, found in Vibrio campbellii (strain ATCC BAA-1116).